Reading from the N-terminus, the 224-residue chain is Putative cobalt transport protein CbiM (224 aa).

Transmembrane regions (helical) follow at residues 8–28 (LPPL…VYGI), 41–61 (AMPM…LKMP), 75–95 (FGAV…VLVF), 108–128 (LGAN…AVWL), 138–158 (EIAM…VTAI), and 169–189 (FFTA…PLAI).

It belongs to the CbiM family. As to quaternary structure, forms an energy-coupling factor (ECF) transporter complex composed of an ATP-binding protein (A component, CbiO), a transmembrane protein (T component, CbiQ) and 2 possible substrate-capture proteins (S components, CbiM and CbiN) of unknown stoichimetry.

The protein resides in the cell membrane. It functions in the pathway cofactor biosynthesis; adenosylcobalamin biosynthesis. Functionally, part of the energy-coupling factor (ECF) transporter complex CbiMNOQ involved in cobalt import. This chain is Putative cobalt transport protein CbiM, found in Methanosphaera stadtmanae (strain ATCC 43021 / DSM 3091 / JCM 11832 / MCB-3).